Consider the following 149-residue polypeptide: Transcriptional repressor NrdR (149 aa).

Residues 3-34 fold into a zinc finger; that stretch reads CPFCDTEETKVIDSRLVSDGYQVRRRRECGHC. One can recognise an ATP-cone domain in the interval 49 to 139; the sequence is PKIIKTDGTR…VYLSFDDIDQ (91 aa).

Belongs to the NrdR family. Requires Zn(2+) as cofactor.

Negatively regulates transcription of bacterial ribonucleotide reductase nrd genes and operons by binding to NrdR-boxes. This chain is Transcriptional repressor NrdR, found in Haemophilus influenzae (strain 86-028NP).